A 228-amino-acid polypeptide reads, in one-letter code: DNA-binding response regulator MtrA (228 aa).

The region spanning 7–120 (RILVVDDDPS…ELVARVRARL (114 aa)) is the Response regulatory domain. 4-aspartylphosphate is present on aspartate 56. Residues 128-227 (AEMLSIGDVE…VRGVGYKAGP (100 aa)) constitute a DNA-binding region (ompR/PhoB-type).

In terms of assembly, probably a monomer when inactive, phosphorylation may permit it to oligomerize. The monomeric form does not seem to be phosphorylated. Phosphorylated by MtrB.

Its subcellular location is the cytoplasm. Its function is as follows. Member of the two-component regulatory system MtrA/MtrB, responding to environmental signals. Controls expression of a number of genes including dnaA, ripA, fbpB and probably itself. Probably plays a role in cell division. In Mycolicibacterium smegmatis (strain ATCC 700084 / mc(2)155) (Mycobacterium smegmatis), this protein is DNA-binding response regulator MtrA (mtrA).